A 649-amino-acid chain; its full sequence is MQQDGLGVGTRNGSGKGRSVHPSWPWCAPRPLRYFGRDARARRAQTAAMALLAGGLSRGLGSHPAAAGRDAVVFVWLLLSTWCTAPARAIQVTVSNPYHVVILFQPVTLPCTYQMTSTPTQPIVIWKYKSFCRDRIADAFSPASVDNQLNAQLAAGNPGYNPYVECQDSVRTVRVVATKQGNAVTLGDYYQGRRITITGNADLTFDQTAWGDSGVYYCSVVSAQDLQGNNEAYAELIVLGRTSGVAELLPGFQAGPIEDWLFVVVVCLAAFLIFLLLGICWCQCCPHTCCCYVRCPCCPDKCCCPEALYAAGKAATSGVPSIYAPSTYAHLSPAKTPPPPAMIPMGPAYNGYPGGYPGDVDRSSSAGGQGSYVPLLRDTDSSVASEVRSGYRIQASQQDDSMRVLYYMEKELANFDPSRPGPPSGRVERAMSEVTSLHEDDWRSRPSRGPALTPIRDEEWGGHSPRSPRGWDQEPAREQAGGGWRARRPRARSVDALDDLTPPSTAESGSRSPTSNGGRSRAYMPPRSRSRDDLYDQDDSRDFPRSRDPHYDDFRSRERPPADPRSHHHRTRDPRDNGSRSGDLPYDGRLLEEAVRKKGSEERRRPHKEEEEEAYYPPAPPPYSETDSQASRERRLKKNLALSRESLVV.

The span at 1–16 (MQQDGLGVGTRNGSGK) shows a compositional bias: gly residues. The tract at residues 1 to 21 (MQQDGLGVGTRNGSGKGRSVH) is disordered. The Extracellular segment spans residues 1 to 259 (MQQDGLGVGT…PGFQAGPIED (259 aa)). Positions 86–234 (PARAIQVTVS…DLQGNNEAYA (149 aa)) constitute an Ig-like V-type domain. Cys-111 and Cys-218 are oxidised to a cystine. A helical membrane pass occupies residues 260-280 (WLFVVVVCLAAFLIFLLLGIC). Topologically, residues 281–649 (WCQCCPHTCC…LALSRESLVV (369 aa)) are cytoplasmic. Thr-336 is subject to Phosphothreonine. Ser-365, Ser-371, Ser-389, Ser-432, and Ser-436 each carry phosphoserine. Positions 414–649 (NFDPSRPGPP…LALSRESLVV (236 aa)) are disordered. Basic and acidic residues predominate over residues 426 to 444 (RVERAMSEVTSLHEDDWRS). At Thr-453 the chain carries Phosphothreonine. Ser-464, Ser-467, and Ser-493 each carry phosphoserine. Thr-501 carries the post-translational modification Phosphothreonine. Residues 502–518 (PPSTAESGSRSPTSNGG) are compositionally biased toward polar residues. 2 positions are modified to phosphoserine: Ser-528 and Ser-530. Over residues 529 to 565 (RSRDDLYDQDDSRDFPRSRDPHYDDFRSRERPPADPR) the composition is skewed to basic and acidic residues. Phosphotyrosine is present on Tyr-535. A phosphoserine mark is found at Ser-540 and Ser-579. Residues 589 to 609 (RLLEEAVRKKGSEERRRPHKE) are compositionally biased toward basic and acidic residues. Ser-631 is subject to Phosphoserine. Lys-638 is covalently cross-linked (Glycyl lysine isopeptide (Lys-Gly) (interchain with G-Cter in ubiquitin)). Residues Ser-643 and Ser-646 each carry the phosphoserine modification.

Belongs to the immunoglobulin superfamily. LISCH7 family. As to quaternary structure, homotrimer or homotetramer. Assembles into cell-cell contacts. Interacts (via the cytoplasmic domain) with MARVELD2 (via C-terminal cytoplasmic domain); the interaction is required to recruit MARVELD2 to tricellular contacts. Interacts with OCLN. Post-translationally, phosphorylation at Ser-365 by MAPK8/JNK1 and MAPK9/JNK2 may be required for exclusive localization at tricellular tight junstions. In terms of processing, polyubiquitinated at Lys-638 via 'Lys-63'-linked ubiquitin chains; deubiquitinated by USP53.

It is found in the cell membrane. It localises to the cell junction. Its subcellular location is the tight junction. Probable role in the clearance of triglyceride-rich lipoprotein from blood. Binds chylomicrons, LDL and VLDL in presence of free fatty acids and allows their subsequent uptake in the cells. Maintains epithelial barrier function by recruiting MARVELD2/tricellulin to tricellular tight junctions. The chain is Lipolysis-stimulated lipoprotein receptor from Homo sapiens (Human).